The following is a 169-amino-acid chain: Protein GrpE (169 aa).

A disordered region spans residues 1–25; sequence MSEEKQNGQIQEETVENSENQNNEL. A compositionally biased stretch (polar residues) spans 7–23; it reads NGQIQEETVENSENQNN.

Belongs to the GrpE family. In terms of assembly, homodimer.

It is found in the cytoplasm. Participates actively in the response to hyperosmotic and heat shock by preventing the aggregation of stress-denatured proteins, in association with DnaK and GrpE. It is the nucleotide exchange factor for DnaK and may function as a thermosensor. Unfolded proteins bind initially to DnaJ; upon interaction with the DnaJ-bound protein, DnaK hydrolyzes its bound ATP, resulting in the formation of a stable complex. GrpE releases ADP from DnaK; ATP binding to DnaK triggers the release of the substrate protein, thus completing the reaction cycle. Several rounds of ATP-dependent interactions between DnaJ, DnaK and GrpE are required for fully efficient folding. The protein is Protein GrpE of Campylobacter lari (strain RM2100 / D67 / ATCC BAA-1060).